A 91-amino-acid chain; its full sequence is DNA-binding protein HU (91 aa).

The protein belongs to the bacterial histone-like protein family.

Histone-like DNA-binding protein which is capable of wrapping DNA to stabilize it, and thus to prevent its denaturation under extreme environmental conditions. The polypeptide is DNA-binding protein HU (hup) (Clostridium pasteurianum).